The chain runs to 502 residues: Glycerol kinase (502 aa).

T14 lines the ADP pocket. The ATP site is built by T14, T15, and S16. T14 provides a ligand contact to sn-glycerol 3-phosphate. R18 contacts ADP. Sn-glycerol 3-phosphate is bound by residues R84, E85, Y136, and D246. Residues R84, E85, Y136, D246, and Q247 each coordinate glycerol. 2 residues coordinate ADP: T268 and G311. ATP-binding residues include T268, G311, Q315, and G412. G412 and N416 together coordinate ADP.

The protein belongs to the FGGY kinase family. Homotetramer and homodimer (in equilibrium). Heterodimer with EIIA-Glc. Binds 1 zinc ion per glycerol kinase EIIA-Glc dimer. The zinc ion is important for dimerization.

It catalyses the reaction glycerol + ATP = sn-glycerol 3-phosphate + ADP + H(+). The protein operates within polyol metabolism; glycerol degradation via glycerol kinase pathway; sn-glycerol 3-phosphate from glycerol: step 1/1. Activity of this regulatory enzyme is affected by several metabolites. Allosterically and non-competitively inhibited by fructose 1,6-bisphosphate (FBP) and unphosphorylated phosphocarrier protein EIIA-Glc (III-Glc), an integral component of the bacterial phosphotransferase (PTS) system. Functionally, key enzyme in the regulation of glycerol uptake and metabolism. Catalyzes the phosphorylation of glycerol to yield sn-glycerol 3-phosphate. This Escherichia coli (strain ATCC 8739 / DSM 1576 / NBRC 3972 / NCIMB 8545 / WDCM 00012 / Crooks) protein is Glycerol kinase.